Consider the following 440-residue polypeptide: Transposon Ty1-ML1 Gag polyprotein (440 aa).

3 stretches are compositionally biased toward polar residues: residues 1 to 23, 48 to 60, and 127 to 152; these read MESQ…SVTS, TKAN…TPAS, and QSQF…GNTF. Disordered stretches follow at residues 1-88, 126-173, and 352-440; these read MESQ…YPQQ, PQSQ…RPPP, and GSRN…PETY. Residues 153-165 show a composition bias toward low complexity; that stretch reads TDSSSADSDMTST. The RNA-binding stretch occupies residues 299-401; sequence NNGIHINNKV…NSKSKTARAH (103 aa). A compositionally biased stretch (low complexity) spans 402 to 418; the sequence is NVSTSNNSPSTDNDSIS. At S416 the chain carries Phosphoserine. The segment covering 419 to 428 has biased composition (polar residues); sequence KSTTEPIQLN. Basic and acidic residues predominate over residues 429 to 440; the sequence is NKHDLHLRPETY.

In terms of assembly, homotrimer.

The protein localises to the cytoplasm. Functionally, capsid protein (CA) is the structural component of the virus-like particle (VLP), forming the shell that encapsulates the retrotransposons dimeric RNA genome. The particles are assembled from trimer-clustered units and there are holes in the capsid shells that allow for the diffusion of macromolecules. CA also has nucleocapsid-like chaperone activity, promoting primer tRNA(i)-Met annealing to the multipartite primer-binding site (PBS), dimerization of Ty1 RNA and initiation of reverse transcription. This chain is Transposon Ty1-ML1 Gag polyprotein (TY1A-ML1), found in Saccharomyces cerevisiae (strain ATCC 204508 / S288c) (Baker's yeast).